The chain runs to 241 residues: Small ribosomal subunit protein uS2 (241 aa).

The protein belongs to the universal ribosomal protein uS2 family.

This Glaesserella parasuis serovar 5 (strain SH0165) (Haemophilus parasuis) protein is Small ribosomal subunit protein uS2.